A 580-amino-acid polypeptide reads, in one-letter code: Tripeptidyl-peptidase sed5 (580 aa).

Residues 1 to 21 (MYPLDGSARPHPPGTTRLNSV) form a disordered region. The region spanning 181–567 (RAQRLIVAEL…RRTLEELRRI (387 aa)) is the Peptidase S53 domain. N-linked (GlcNAc...) asparagine glycosylation occurs at Asn-236. Active-site charge relay system residues include Glu-269, Asp-273, and Ser-479. Ca(2+)-binding residues include Asp-523 and Ile-524. Asn-529 is a glycosylation site (N-linked (GlcNAc...) asparagine). Residues Gly-543, Gly-545, and Asp-547 each coordinate Ca(2+).

Requires Ca(2+) as cofactor.

It localises to the secreted. The protein resides in the extracellular space. The catalysed reaction is Release of an N-terminal tripeptide from a polypeptide.. Functionally, secreted tripeptidyl-peptidase which degrades proteins at acidic pHs and is involved in virulence. The protein is Tripeptidyl-peptidase sed5 (sed5) of Aspergillus fumigatus (strain ATCC MYA-4609 / CBS 101355 / FGSC A1100 / Af293) (Neosartorya fumigata).